Here is a 175-residue protein sequence, read N- to C-terminus: Trafficking protein particle complex subunit 20 (175 aa).

This sequence belongs to the TRAPP small subunits family. Sedlin subfamily. Part of the multisubunit TRAPP (transport protein particle) I complex composed of BET3, BET5, TRS20, TRS23, TRS31 and TRS33. Part of the multisubunit TRAPP (transport protein particle) II complex composed of BET3, BET5, TRS20, TRS23, TRS31, TRS33, TRS65, TRS85, TRS120 and TRS130. Part of the multisubunit TRAPP (transport protein particle) III complex composed of BET3, BET5, TRS20, TRS23, TRS31, TRS33 and TRS85.

The protein resides in the golgi apparatus. It is found in the cis-Golgi network. The protein localises to the endoplasmic reticulum. Its subcellular location is the preautophagosomal structure. Component of the TRAPP I, TRAPP II and TRAPP III complexes which act as guanine nucleotide exchange factors (GEF) for YPT1. TRAPP I plays a key role in the late stages of endoplasmic reticulum to Golgi traffic. TRAPP II plays a role in intra-Golgi transport. TRAPP III plays a role in autophagosome formation. The protein is Trafficking protein particle complex subunit 20 (TRS20) of Saccharomyces cerevisiae (strain ATCC 204508 / S288c) (Baker's yeast).